The chain runs to 277 residues: Indole-3-glycerol phosphate synthase (277 aa).

This sequence belongs to the TrpC family.

It carries out the reaction 1-(2-carboxyphenylamino)-1-deoxy-D-ribulose 5-phosphate + H(+) = (1S,2R)-1-C-(indol-3-yl)glycerol 3-phosphate + CO2 + H2O. The protein operates within amino-acid biosynthesis; L-tryptophan biosynthesis; L-tryptophan from chorismate: step 4/5. In Pseudomonas putida (strain ATCC 47054 / DSM 6125 / CFBP 8728 / NCIMB 11950 / KT2440), this protein is Indole-3-glycerol phosphate synthase.